The primary structure comprises 312 residues: Malate dehydrogenase (312 aa).

NAD(+)-binding positions include 7–13 (GAAGGIG) and aspartate 34. Residues arginine 81 and arginine 87 each coordinate substrate. NAD(+)-binding positions include asparagine 94 and 117 to 119 (ITN). Residues asparagine 119 and arginine 153 each contribute to the substrate site. Histidine 177 acts as the Proton acceptor in catalysis. Residue methionine 227 participates in NAD(+) binding.

Belongs to the LDH/MDH superfamily. MDH type 1 family. In terms of assembly, homodimer.

It carries out the reaction (S)-malate + NAD(+) = oxaloacetate + NADH + H(+). Its function is as follows. Catalyzes the reversible oxidation of malate to oxaloacetate. The chain is Malate dehydrogenase from Serratia proteamaculans (strain 568).